We begin with the raw amino-acid sequence, 107 residues long: Putative nucleosome assembly protein 1-like 6 (107 aa).

It belongs to the nucleosome assembly protein (NAP) family.

The chain is Putative nucleosome assembly protein 1-like 6 from Homo sapiens (Human).